The following is a 1166-amino-acid chain: IQ domain-containing protein N (1166 aa).

A compositionally biased stretch (polar residues) spans 1 to 19 (MQPATQLQFTNHLSPNGQC). The tract at residues 1–56 (MQPATQLQFTNHLSPNGQCILQPPPTPSLPDKMEKAPPQPQHEGLKSEEHLPQQPA) is disordered. The IQ 1 domain maps to 89 to 118 (HARAATLIQANWRGYRLRQKLISQMTAAKA). Disordered stretches follow at residues 431–450 (VCPG…VATP), 769–797 (LSAP…TTQG), and 829–848 (DSGA…PCQE). 5 IQ domains span residues 907 to 932 (AVTT…RRAT), 928 to 955 (HRRA…RATT), 952 to 979 (RATT…MLHP), 1091 to 1119 (RDKA…MAAK), and 1114 to 1143 (QQMA…LLGP). The disordered stretch occupies residues 1145–1166 (DPWSSSQHMHWASSQHTHWPGI). Over residues 1147 to 1166 (WSSSQHMHWASSQHTHWPGI) the composition is skewed to polar residues.

As to quaternary structure, interacts with calmodulin.

Its function is as follows. Essential for spermiogenesis and fertilization. May be required for manchette assembly in elongating spermatids. This Macaca fascicularis (Crab-eating macaque) protein is IQ domain-containing protein N (IQCN).